Reading from the N-terminus, the 1040-residue chain is Multidrug resistance protein MdtB (1040 aa).

12 helical membrane-spanning segments follow: residues 25–45 (LLMA…PVAA), 347–367 (LMLA…NIPA), 369–389 (IIPG…MVFL), 396–416 (LTLM…IVVI), 440–460 (IGFT…PLLF), 472–492 (FAVT…TLTP), 537–557 (WLTL…WIVI), 863–883 (LGST…VLGV), 888–908 (FIHP…ALLA), 910–930 (IIAG…LIGI), 968–988 (ILMT…STGV), and 998–1018 (IAMV…TPVI).

The protein belongs to the resistance-nodulation-cell division (RND) (TC 2.A.6) family. MdtB subfamily. As to quaternary structure, part of a tripartite efflux system composed of MdtA, MdtB and MdtC. MdtB forms a heteromultimer with MdtC.

It localises to the cell inner membrane. The chain is Multidrug resistance protein MdtB from Salmonella choleraesuis (strain SC-B67).